The chain runs to 279 residues: Urease accessory protein UreD (279 aa).

It belongs to the UreD family. As to quaternary structure, ureD, UreF and UreG form a complex that acts as a GTP-hydrolysis-dependent molecular chaperone, activating the urease apoprotein by helping to assemble the nickel containing metallocenter of UreC. The UreE protein probably delivers the nickel.

The protein resides in the cytoplasm. Required for maturation of urease via the functional incorporation of the urease nickel metallocenter. This chain is Urease accessory protein UreD, found in Streptococcus salivarius (strain 57.I).